The primary structure comprises 99 residues: U2-theraphotoxin-Lsp1a (99 aa).

The signal sequence occupies residues 1–22 (MNTIQVIIFAVVLVLTVTVGQA). A propeptide spanning residues 23 to 57 (DEDSPEASLLRKLKEAEASLFGQNLEESRNSRQKR) is cleaved from the precursor. 3 cysteine pairs are disulfide-bonded: C58–C73, C65–C78, and C72–C93.

The protein belongs to the neurotoxin 14 (magi-1) family. 08 (Ltx-4) subfamily. In terms of tissue distribution, expressed by the venom gland.

It localises to the secreted. Functionally, insecticidal neurotoxin. The protein is U2-theraphotoxin-Lsp1a of Lasiodora sp. (strain IBSP 8539) (Brazilian salmon pink birdeater).